Here is a 245-residue protein sequence, read N- to C-terminus: Nodulation protein G (245 aa).

Position 11-35 (Val11–Leu35) interacts with NAD(+). Residue Ser139 participates in substrate binding. The Proton acceptor role is filled by Tyr152.

It belongs to the short-chain dehydrogenases/reductases (SDR) family.

Functionally, proposed to modify Nod factor fatty acyl chain. The protein is Nodulation protein G (nodG) of Rhizobium sp. (strain N33).